A 231-amino-acid chain; its full sequence is Phosphatidylserine decarboxylase proenzyme (231 aa).

The Schiff-base intermediate with substrate; via pyruvic acid role is filled by Ser-188. Pyruvic acid (Ser); by autocatalysis is present on Ser-188.

This sequence belongs to the phosphatidylserine decarboxylase family. PSD-A subfamily. In terms of assembly, heterodimer of a large membrane-associated beta subunit and a small pyruvoyl-containing alpha subunit. The cofactor is pyruvate. Is synthesized initially as an inactive proenzyme. Formation of the active enzyme involves a self-maturation process in which the active site pyruvoyl group is generated from an internal serine residue via an autocatalytic post-translational modification. Two non-identical subunits are generated from the proenzyme in this reaction, and the pyruvate is formed at the N-terminus of the alpha chain, which is derived from the carboxyl end of the proenzyme. The post-translation cleavage follows an unusual pathway, termed non-hydrolytic serinolysis, in which the side chain hydroxyl group of the serine supplies its oxygen atom to form the C-terminus of the beta chain, while the remainder of the serine residue undergoes an oxidative deamination to produce ammonia and the pyruvoyl prosthetic group on the alpha chain.

It is found in the cell membrane. The catalysed reaction is a 1,2-diacyl-sn-glycero-3-phospho-L-serine + H(+) = a 1,2-diacyl-sn-glycero-3-phosphoethanolamine + CO2. The protein operates within phospholipid metabolism; phosphatidylethanolamine biosynthesis; phosphatidylethanolamine from CDP-diacylglycerol: step 2/2. In terms of biological role, catalyzes the formation of phosphatidylethanolamine (PtdEtn) from phosphatidylserine (PtdSer). The chain is Phosphatidylserine decarboxylase proenzyme from Rickettsia bellii (strain OSU 85-389).